Consider the following 181-residue polypeptide: Der GTPase-activating protein YihI (181 aa).

Residues 1 to 73 form a disordered region; sequence MSRIKKARKP…DPRIGSKKPI (73 aa). Residues 22 to 32 are compositionally biased toward basic and acidic residues; it reads NRTDRDVESRE. The segment covering 33-42 has biased composition (basic residues); the sequence is LKRKRKRKGL. Residues 55–67 are compositionally biased toward basic and acidic residues; it reads QARRNAQKKDPRI.

Belongs to the YihI family. Interacts with Der.

Functionally, a GTPase-activating protein (GAP) that modifies Der/EngA GTPase function. May play a role in ribosome biogenesis. The chain is Der GTPase-activating protein YihI from Aliivibrio fischeri (strain MJ11) (Vibrio fischeri).